The following is a 344-amino-acid chain: MIKVGIVGGTGYTGVELLRLLAQHPQAEVAVITSRSEAGVAVADMYPNLRGHYDGLAFSVPDSKALSACDVVFFATPHGVAHALAGELLAAGTKVIDLSADFRLQDAAEWAKWYGQPHGAPELLKDAVYGLPEVNREKIRLARLIAVPGCYPTATQLGFLPLLEAGLADPSRLIADCKSGVSGAGRGAAVGSLFCEAGESMKAYAVKGHRHLPEISQGLRLAAGTDIGLTFVPHLTPMIRGIHSTLYATVADKSVDLQALFEKRYADEPFVDVMPAGSHPETRSVRGANVCRIAVHRPQGGDLVVVLSVIDNLVKGASGQAVQNLNILFGLDERMGLSHAGLLP.

Cysteine 150 is a catalytic residue.

This sequence belongs to the NAGSA dehydrogenase family. Type 1 subfamily.

The protein localises to the cytoplasm. It catalyses the reaction N-acetyl-L-glutamate 5-semialdehyde + phosphate + NADP(+) = N-acetyl-L-glutamyl 5-phosphate + NADPH + H(+). The protein operates within amino-acid biosynthesis; L-arginine biosynthesis; N(2)-acetyl-L-ornithine from L-glutamate: step 3/4. In terms of biological role, catalyzes the NADPH-dependent reduction of N-acetyl-5-glutamyl phosphate to yield N-acetyl-L-glutamate 5-semialdehyde. This Pseudomonas putida (strain W619) protein is N-acetyl-gamma-glutamyl-phosphate reductase.